A 317-amino-acid chain; its full sequence is R2-like ligand binding oxidase (317 aa).

E73, E106, and H109 together coordinate Mn(2+). Positions 76-167 (VTQDLQPFMA…ANQVRASVTY (92 aa)) form a cross-link, 3-(O4'-tyrosyl)-valine (Val-Tyr). E106 serves as a coordination point for Fe cation. Residues E172, E207, and H210 each contribute to the Fe cation site.

It belongs to the ribonucleoside diphosphate reductase small chain family. R2-like ligand binding oxidase subfamily. In terms of assembly, homodimer. It depends on Fe cation as a cofactor. Mn(2+) is required as a cofactor.

Its function is as follows. Probable oxidase. This is R2-like ligand binding oxidase from Saccharopolyspora erythraea (strain ATCC 11635 / DSM 40517 / JCM 4748 / NBRC 13426 / NCIMB 8594 / NRRL 2338).